A 24-amino-acid polypeptide reads, in one-letter code: Probable caffeoyl-CoA O-methyltransferase (24 aa).

Belongs to the class I-like SAM-binding methyltransferase superfamily. Cation-dependent O-methyltransferase family. CCoAMT subfamily. Requires a divalent metal cation as cofactor.

The enzyme catalyses (E)-caffeoyl-CoA + S-adenosyl-L-methionine = (E)-feruloyl-CoA + S-adenosyl-L-homocysteine + H(+). It functions in the pathway aromatic compound metabolism; phenylpropanoid biosynthesis. Methylates caffeoyl-CoA to feruloyl-CoA and 5-hydroxyferuloyl-CoA to sinapoyl-CoA. Plays a role in the synthesis of feruloylated polysaccharides. Involved in the reinforcement of the plant cell wall. Also involved in the responding to wounding or pathogen challenge by the increased formation of cell wall-bound ferulic acid polymers. In Pinus pinaster (Maritime pine), this protein is Probable caffeoyl-CoA O-methyltransferase.